The sequence spans 310 residues: Deoxypodophyllotoxin synthase (310 aa).

The region spanning 159–258 (STNYLLHFMR…RLSTSSFSFP (100 aa)) is the Fe2OG dioxygenase domain. Residues histidine 184, aspartate 186, and histidine 239 each contribute to the Fe cation site. Arginine 249 is a 2-oxoglutarate binding site.

It belongs to the iron/ascorbate-dependent oxidoreductase family. It depends on Fe(2+) as a cofactor. In terms of tissue distribution, mostly expressed in leaves and stems.

It catalyses the reaction (-)-yatein + 2-oxoglutarate + O2 = (-)-deoxypodophyllotoxin + succinate + CO2 + H2O. Its pathway is aromatic compound metabolism; phenylpropanoid biosynthesis. 2-oxoglutarate-dependent dioxygenase involved in the biosynthesis of etoposide, a chemotherapeutic compound of the topoisomerase inhibitor family. Catalyzes the conversion of yatein to deoxypodophyllotoxin. Can also use, to some extent, demethylyatein as substrate. This chain is Deoxypodophyllotoxin synthase, found in Sinopodophyllum hexandrum (Himalayan may apple).